A 240-amino-acid chain; its full sequence is MNAEKSPVNHNVDHKEIAKFEAVASRWWDLEGEFKPLHRINPLRLGYIAERAGGLFGKKVLDVGCGGGILAESMAREGATVTGLDMGFEPLQVAKLHALESGIQVDYVQETVEEHAAKHAGQYDVVTCMEMLEHVPDPQSVVRACAQLVKPGGDVFFSTLNRNGKSWLMAVVGAEYILRMVPKGTHDVKKFIKPAELLGWVDQTSLKERHMTGLHYNPITNSFKLGPGVDVNYMLHTQNK.

S-adenosyl-L-methionine-binding residues include Arg-44, Gly-64, Asp-85, and Met-129.

Belongs to the methyltransferase superfamily. UbiG/COQ3 family.

It carries out the reaction a 3-demethylubiquinol + S-adenosyl-L-methionine = a ubiquinol + S-adenosyl-L-homocysteine + H(+). It catalyses the reaction a 3-(all-trans-polyprenyl)benzene-1,2-diol + S-adenosyl-L-methionine = a 2-methoxy-6-(all-trans-polyprenyl)phenol + S-adenosyl-L-homocysteine + H(+). It functions in the pathway cofactor biosynthesis; ubiquinone biosynthesis. O-methyltransferase that catalyzes the 2 O-methylation steps in the ubiquinone biosynthetic pathway. The polypeptide is Ubiquinone biosynthesis O-methyltransferase (Escherichia coli O81 (strain ED1a)).